The chain runs to 193 residues: Nucleoside triphosphate pyrophosphatase (193 aa).

D69 acts as the Proton acceptor in catalysis.

This sequence belongs to the Maf family. A divalent metal cation serves as cofactor.

Its subcellular location is the cytoplasm. It catalyses the reaction a ribonucleoside 5'-triphosphate + H2O = a ribonucleoside 5'-phosphate + diphosphate + H(+). It carries out the reaction a 2'-deoxyribonucleoside 5'-triphosphate + H2O = a 2'-deoxyribonucleoside 5'-phosphate + diphosphate + H(+). Its function is as follows. Nucleoside triphosphate pyrophosphatase. May have a dual role in cell division arrest and in preventing the incorporation of modified nucleotides into cellular nucleic acids. The polypeptide is Nucleoside triphosphate pyrophosphatase (Parasynechococcus marenigrum (strain WH8102)).